A 647-amino-acid polypeptide reads, in one-letter code: Probable inactive receptor kinase RLK902 (647 aa).

A signal peptide spans 1 to 29 (MRLFFTPSMSNLSIFFSILLLSLPLPSIG). LRR repeat units follow at residues 69–93 (GGRV…IFGN), 94–118 (LTQL…LGSC), 119–142 (SDLR…LFSL), 144–165 (NLVR…GFKN), and 166–192 (LTRL…SLDQ). Residues 268–288 (GIVIGCVVGLSLIVMILMVLF) traverse the membrane as a helical segment. A Protein kinase domain is found at 365–639 (RASAEVLGKG…EVVRRIQELR (275 aa)). Ser-367 is subject to Phosphoserine. 371 to 379 (LGKGTFGTA) is an ATP binding site. Position 388 is a phosphothreonine (Thr-388). Lys-393 provides a ligand contact to ATP. Ser-444 is subject to Phosphoserine. Residue Thr-520 is modified to Phosphothreonine. Ser-540 is modified (phosphoserine). Phosphothreonine is present on Thr-618.

This sequence belongs to the protein kinase superfamily. Ser/Thr protein kinase family. Interacts with At3g17950, At3g27210 and At5g05190. Post-translationally, autophosphorylation. Expressed in root tips, lateral root primordia, stipules, and floral organ abscission zones.

Its subcellular location is the cell membrane. In Arabidopsis thaliana (Mouse-ear cress), this protein is Probable inactive receptor kinase RLK902 (RLK902).